A 594-amino-acid chain; its full sequence is Estrogen receptor (594 aa).

Positions 1–184 are modulating (transactivation AF-1); mediates interaction with MACROD1; it reads MTMTLHTKAS…AMESAKETRY (184 aa). Ser-10 is a glycosylation site (O-linked (GlcNAc) serine). Residues 35–47 are required for interaction with NCOA1; that stretch reads LERPLGEVYVESS. An interaction with DDX5; self-association region spans residues 35-174; that stretch reads LERPLGEVYV…LASSGDKGSM (140 aa). Residues Ser-104 and Ser-106 each carry the phosphoserine; by CDK2 modification. A Phosphoserine modification is found at Ser-118. Positions 152-173 are disordered; it reads PNADNRRQGGRERLASSGDKGS. The span at 154 to 165 shows a compositional bias: basic and acidic residues; that stretch reads ADNRRQGGRERL. Ser-167 is subject to Phosphoserine; by CK2. 2 NR C4-type zinc fingers span residues 185–205 and 221–245; these read CAVC…CEGC and CPAT…LRKC. A DNA-binding region (nuclear receptor) is located at residues 185-250; the sequence is CAVCNDYASG…RLRKCYEVGM (66 aa). Residues 185–310 form a mediates interaction with DNTTIP2 region; that stretch reads CAVCNDYASG…TKKISPVLSL (126 aa). Positions 251–310 are hinge; sequence MKGGIRKDRRGGRMLKHKRQRDDGEGRNEAGPSGDRRPANFWPSPLLIKHTKKISPVLSL. Over residues 257 to 269 the composition is skewed to basic residues; sequence KDRRGGRMLKHKR. Residues 257 to 293 form a disordered region; the sequence is KDRRGGRMLKHKRQRDDGEGRNEAGPSGDRRPANFWP. Position 260 is an asymmetric dimethylarginine; by PRMT1 (Arg-260). The interval 262 to 594 is interaction with AKAP13; sequence GRMLKHKRQR…GEAEGFPNTI (333 aa). Positions 264–594 are self-association; the sequence is MLKHKRQRDD…GEAEGFPNTI (331 aa). A compositionally biased stretch (basic and acidic residues) spans 270-288; that stretch reads QRDDGEGRNEAGPSGDRRP. The 236-residue stretch at 311-546 folds into the NR LBD domain; that stretch reads TAEQMISALL…DLLLEMLDAH (236 aa). Residues 311 to 594 are transactivation AF-2; the sequence is TAEQMISALL…GEAEGFPNTI (284 aa). Glu-353 and Arg-394 together coordinate 17beta-estradiol. Cys-447 is lipidated: S-palmitoyl cysteine. 17beta-estradiol is bound at residue His-523. A Phosphotyrosine; by Tyr-kinases modification is found at Tyr-536. Positions 551–575 are disordered; the sequence is PANHGGAPMEETNQSQLATTGSTSP. Positions 561–575 are enriched in polar residues; that stretch reads ETNQSQLATTGSTSP. A glycan (O-linked (GlcNAc) threonine) is linked at Thr-570.

Belongs to the nuclear hormone receptor family. NR3 subfamily. In terms of assembly, binds DNA as a homodimer. Can form a heterodimer with ESR2. Interacts with coactivator NCOA5. Interacts with PELP1, the interaction is enhanced by 17-beta-estradiol; the interaction increases ESR1 transcriptional activity. Interacts with NCOA7; the interaction is ligand-inducible. Interacts with AKAP13, CUEDC2, HEXIM1, KDM5A, MAP1S, SMARD1, and UBE1C. Interacts with MUC1; the interaction is stimulated by 7 beta-estradiol (E2) and enhances ESR1-mediated transcription. Interacts with DNTTIP2, and UIMC1. Interacts with KMT2D/MLL2. Interacts with ATAD2; the interaction is enhanced by estradiol. Interacts with KIF18A and LDB1. Interacts with RLIM (via its C-terminus). Interacts with MACROD1. Interacts with SH2D4A and PLCG. Interacts with SH2D4A; the interaction blocks binding to PLCG and inhibits estrogen-induced cell proliferation. Interacts with DYNLL1. Interacts with CCDC62; the interaction requires estradiol and appears to enhance the transcription of target genes. Interacts with NR2C1; the interaction prevents homodimerization of ESR1 and suppresses its transcriptional activity and cell growth. Interacts with DNAAF4. Interacts with PRMT2. Interacts with RBFOX2. Interacts with EP300; the interaction is estrogen-dependent and enhanced by CITED1. Interacts with CITED1; the interaction is estrogen-dependent. Interacts with FAM120B, FOXL2, PHB2 and SLC30A9. Interacts with coactivators NCOA3 and NCOA6. Interacts with STK3/MST2 only in the presence of SAV1 and vice-versa. Binds to CSNK1D. Interacts with NCOA2; NCOA2 can interact with ESR1 AF-1 and AF-2 domains simultaneously and mediate their transcriptional synergy. Interacts with DDX5. Interacts with NCOA1; the interaction seems to require a self-association of N-terminal and C-terminal regions. Interacts with ZNF366, DDX17, NFKB1, RELA, SP1 and SP3. Interacts with NRIP1. Interacts with GPER1; the interaction occurs in an estrogen-dependent manner. Interacts with CLOCK and the interaction is stimulated by estrogen. Interacts with TRIP4 (ufmylated); estrogen dependent. Interacts with LMTK3; the interaction phosphorylates ESR1 (in vitro) and protects it against proteasomal degradation. Interacts with CCAR2 (via N-terminus) in a ligand-independent manner. Interacts with ZFHX3. Interacts with SFR1 in a ligand-dependent and -independent manner. Interacts with DCAF13, LATS1 and DCAF1; regulates ESR1 ubiquitination and ubiquitin-mediated proteasomal degradation. Interacts (via DNA-binding domain) with POU4F2 (C-terminus); this interaction increases the estrogen receptor ESR1 transcriptional activity in a DNA- and ligand 17-beta-estradiol-independent manner. Interacts with ESRRB isoform 1. Interacts with UBE3A and WBP2. Interacts with GTF2B. Interacts with RBM39. In the absence of hormonal ligand, interacts with TACC1. Interacts with PI3KR1 or PI3KR2 and PTK2/FAK1. Interacts with SRC. Interacts with BAG1; the interaction is promoted in the absence of estradiol (17-beta-estradiol/E2). Interacts with and ubiquitinated by STUB1; the interaction is promoted in the absence of estradiol (17-beta-estradiol/E2). Interacts with NEDD8. Ubiquitinated; regulated by LATS1 via DCAF1 it leads to ESR1 proteasomal degradation. Deubiquitinated by OTUB1. Ubiquitinated by STUB1/CHIP; in the CA1 hippocampal region following loss of endogenous circulating estradiol (17-beta-estradiol/E2). Ubiquitinated by UBR5, leading to its degradation: UBR5 specifically recognizes and binds ligand-bound ESR1 when it is not associated with coactivators (NCOAs). In presence of NCOAs, the UBR5-degron is not accessible, preventing its ubiquitination and degradation. Post-translationally, phosphorylated by cyclin A/CDK2 and CK1. Phosphorylation probably enhances transcriptional activity. Dephosphorylation at Ser-118 by PPP5C inhibits its transactivation activity. Phosphorylated by LMTK3 (in vitro). In terms of processing, palmitoylated at Cys-447 by ZDHHC7 and ZDHHC21. Palmitoylation is required for plasma membrane targeting and for rapid intracellular signaling via ERK and AKT kinases and cAMP generation, but not for signaling mediated by the nuclear hormone receptor. Dimethylated by PRMT1 at Arg-260. The methylation may favor cytoplasmic localization. Demethylated by JMJD6 at Arg-260.

It localises to the nucleus. Its subcellular location is the cytoplasm. It is found in the golgi apparatus. The protein resides in the cell membrane. Functionally, nuclear hormone receptor. The steroid hormones and their receptors are involved in the regulation of eukaryotic gene expression and affect cellular proliferation and differentiation in target tissues. Ligand-dependent nuclear transactivation involves either direct homodimer binding to a palindromic estrogen response element (ERE) sequence or association with other DNA-binding transcription factors, such as AP-1/c-Jun, c-Fos, ATF-2, Sp1 and Sp3, to mediate ERE-independent signaling. Ligand binding induces a conformational change allowing subsequent or combinatorial association with multiprotein coactivator complexes through LXXLL motifs of their respective components. Mutual transrepression occurs between the estrogen receptor (ER) and NF-kappa-B in a cell-type specific manner. Decreases NF-kappa-B DNA-binding activity and inhibits NF-kappa-B-mediated transcription from the IL6 promoter and displace RELA/p65 and associated coregulators from the promoter. Recruited to the NF-kappa-B response element of the CCL2 and IL8 promoters and can displace CREBBP. Present with NF-kappa-B components RELA/p65 and NFKB1/p50 on ERE sequences. Can also act synergistically with NF-kappa-B to activate transcription involving respective recruitment adjacent response elements; the function involves CREBBP. Can activate the transcriptional activity of TFF1. Also mediates membrane-initiated estrogen signaling involving various kinase cascades. Essential for MTA1-mediated transcriptional regulation of BRCA1 and BCAS3. Maintains neuronal survival in response to ischemic reperfusion injury when in the presence of circulating estradiol (17-beta-estradiol/E2). This chain is Estrogen receptor (ESR1), found in Equus caballus (Horse).